A 270-amino-acid polypeptide reads, in one-letter code: NAD kinase (270 aa).

Asp57 serves as the catalytic Proton acceptor. NAD(+) contacts are provided by residues 57 to 58, 125 to 126, Arg150, and Asn227; these read DG and NE.

The protein belongs to the NAD kinase family. It depends on a divalent metal cation as a cofactor.

Its subcellular location is the cytoplasm. The catalysed reaction is NAD(+) + ATP = ADP + NADP(+) + H(+). Its function is as follows. Involved in the regulation of the intracellular balance of NAD and NADP, and is a key enzyme in the biosynthesis of NADP. Catalyzes specifically the phosphorylation on 2'-hydroxyl of the adenosine moiety of NAD to yield NADP. The polypeptide is NAD kinase (Ureaplasma parvum serovar 3 (strain ATCC 700970)).